The chain runs to 309 residues: Taste receptor type 2 member 45 (309 aa).

Residue methionine 1 is a topological domain, extracellular. The chain crosses the membrane as a helical span at residues 2-22; the sequence is ITFLPIIFSILVVVTFVIGNF. The Cytoplasmic portion of the chain corresponds to 23–55; the sequence is ANGFIALVNSTEWVKRQKISFADQIVTALAVSR. Residues 56–76 traverse the membrane as a helical segment; it reads VGLLWVLLLNWYSTVLNPAFY. The Extracellular portion of the chain corresponds to 77-98; it reads SVELRTTAYNIWAVTGHFSNWL. A helical transmembrane segment spans residues 99–119; sequence ATSLSIFYLLKIANFSNLIFL. Topologically, residues 120–126 are cytoplasmic; it reads HLKRRVK. The helical transmembrane segment at 127–147 threads the bilayer; that stretch reads SVILVMLLGPLLFLACHLFVV. At 148-178 the chain is on the extracellular side; the sequence is NMNQIVWTKEYEGNMTWKIKLRRAMYLSDTT. A glycan (N-linked (GlcNAc...) asparagine) is linked at asparagine 161. A helical membrane pass occupies residues 179 to 199; sequence VTMLANLVPFTVTLISFLLLV. Topologically, residues 200–229 are cytoplasmic; the sequence is CSLCEHLKKMQLHGKGSQDPSTKVHIKALQ. A helical membrane pass occupies residues 230–250; sequence TVISFLLLCAIYFVSVIISVW. Residues 251-259 are Extracellular-facing; that stretch reads SFKNLENKP. Residues 260 to 280 traverse the membrane as a helical segment; that stretch reads VFMFCQAIGFSCSSAHPFILI. Residues 281 to 309 lie on the Cytoplasmic side of the membrane; that stretch reads WGNKKLKQPFLSVLWQMRYWVKGEKPSSS.

This sequence belongs to the G-protein coupled receptor T2R family.

The protein resides in the membrane. Receptor that may play a role in the perception of bitterness and is gustducin-linked. May play a role in sensing the chemical composition of the gastrointestinal content. The activity of this receptor may stimulate alpha gustducin, mediate PLC-beta-2 activation and lead to the gating of TRPM5. This chain is Taste receptor type 2 member 45 (TAS2R45), found in Pan paniscus (Pygmy chimpanzee).